Consider the following 627-residue polypeptide: MDVTKIKDPSFLKDLSYEELDGLSQDIRTFLIEKCAVTGGHIGANLGVVELTIALHKVFNSPKDKLIFDVGHQTYIHKILTGRAEQFDTLRQYKGLSGFPKLNESEHDVWEAGHSSTSLSAAMGMAKARDIQQQHYEVVPIIGDGALTGGMALEALNHIGHDKTNMTIILNDNEMSIAPNVGAMHNMFGRLRTNSNYNRAKSDIDLFLSKLPGGHKLRDSADRVKDSLKYLVVNGIFFEELGIKYIGPVDGHSYKELEEALLTSKRIDGPVIVHVITKKGKGYHPAENDKIGTWHGLGPYKLETGEVLKGSAQGPSWSQFFSDTVQSFAERDKTIAAITPAMPVGSKLTKFQKELPQQFFDVGIAEQHAVTMAAGMAANGMKPYVAIYSTFLQRAYDQMLHDVDRQNLHVVFGIDRSGLVGADGETHQGVFDISFLTHMPNMTVMMPKDENEAYHLLYNAFYEYEGPIAIRYPRGNGYGVKIDSIPNSVVRGDWEVLHEGTDVIVLSFGPTLKLIEAVREELLKEGVSIEVVNARFIKPLDYHYLAAAAKRNIPVLTVEEAMLSGGFGAAISNHYSDLDLDVHVKRIGIDDEYIEHGDVSMLLDDIGINKANLIHEIKQLAISHEES.

Thiamine diphosphate is bound by residues H72 and 113–115; that span reads GHS. Residue D144 participates in Mg(2+) binding. Thiamine diphosphate contacts are provided by residues 145–146, N173, Y283, and E366; that span reads GA. N173 serves as a coordination point for Mg(2+).

This sequence belongs to the transketolase family. DXPS subfamily. As to quaternary structure, homodimer. Requires Mg(2+) as cofactor. The cofactor is thiamine diphosphate.

The catalysed reaction is D-glyceraldehyde 3-phosphate + pyruvate + H(+) = 1-deoxy-D-xylulose 5-phosphate + CO2. The protein operates within metabolic intermediate biosynthesis; 1-deoxy-D-xylulose 5-phosphate biosynthesis; 1-deoxy-D-xylulose 5-phosphate from D-glyceraldehyde 3-phosphate and pyruvate: step 1/1. Its function is as follows. Catalyzes the acyloin condensation reaction between C atoms 2 and 3 of pyruvate and glyceraldehyde 3-phosphate to yield 1-deoxy-D-xylulose-5-phosphate (DXP). The polypeptide is 1-deoxy-D-xylulose-5-phosphate synthase (Macrococcus caseolyticus (strain JCSC5402) (Macrococcoides caseolyticum)).